The primary structure comprises 197 residues: Casparian strip membrane protein 3 (197 aa).

Over 1 to 35 (MSARVDIPADTSAAAKGTAPLIAASTHVKGGYKKG) the chain is Cytoplasmic. The chain crosses the membrane as a helical span at residues 36–56 (LAIFDLVLRLGAVVTALAAAA). The Extracellular segment spans residues 57 to 85 (TMGTTDQTLPFFTQFFQFQASYDDLPTFQ). Residues 86-106 (FFVIAMAIVSGYLVLSLPFSI) form a helical membrane-spanning segment. At 107–119 (VAIIRPHATGPRL) the chain is on the cytoplasmic side. The chain crosses the membrane as a helical span at residues 120 to 140 (LLIILDTVALTLNTAAAAAAV). Residues 141–171 (AIVDLAQNGNSSANWLGICQQFGDFCQKASG) are Extracellular-facing. Asn-150 carries an N-linked (GlcNAc...) asparagine glycan. A helical membrane pass occupies residues 172–192 (AVVASFIAAGVLLFLIVISAL). The Cytoplasmic segment spans residues 193-197 (ALRKR).

Belongs to the Casparian strip membrane proteins (CASP) family. As to quaternary structure, homodimer and heterodimers.

Its subcellular location is the cell membrane. Its function is as follows. Regulates membrane-cell wall junctions and localized cell wall deposition. Required for establishment of the Casparian strip membrane domain (CSD) and the subsequent formation of Casparian strips, a cell wall modification of the root endodermis that determines an apoplastic barrier between the intraorganismal apoplasm and the extraorganismal apoplasm and prevents lateral diffusion. This is Casparian strip membrane protein 3 from Populus trichocarpa (Western balsam poplar).